The chain runs to 466 residues: 3-isopropylmalate dehydratase large subunit (466 aa).

Cys-347, Cys-407, and Cys-410 together coordinate [4Fe-4S] cluster.

Belongs to the aconitase/IPM isomerase family. LeuC type 1 subfamily. Heterodimer of LeuC and LeuD. The cofactor is [4Fe-4S] cluster.

It carries out the reaction (2R,3S)-3-isopropylmalate = (2S)-2-isopropylmalate. Its pathway is amino-acid biosynthesis; L-leucine biosynthesis; L-leucine from 3-methyl-2-oxobutanoate: step 2/4. In terms of biological role, catalyzes the isomerization between 2-isopropylmalate and 3-isopropylmalate, via the formation of 2-isopropylmaleate. The sequence is that of 3-isopropylmalate dehydratase large subunit from Shewanella sediminis (strain HAW-EB3).